A 60-amino-acid chain; its full sequence is Large ribosomal subunit protein bL32 (60 aa).

A disordered region spans residues 1–21 (MAVPRNRHSNARKNIRRSHDA).

It belongs to the bacterial ribosomal protein bL32 family.

The sequence is that of Large ribosomal subunit protein bL32 from Chlamydia felis (strain Fe/C-56) (Chlamydophila felis).